An 80-amino-acid chain; its full sequence is MCSISFLVLVSISFSMFLLSLNFMLNEYCVFLEWEVVSLNSSGIVMTFLFDWMSLLFMSFVLLISSLVIYYSKEYINSSY.

Transmembrane regions (helical) follow at residues 4-24 (ISFLVLVSISFSMFLLSLNFM) and 44-64 (IVMTFLFDWMSLLFMSFVLLI).

This sequence belongs to the complex I subunit 5 family.

It localises to the mitochondrion inner membrane. The catalysed reaction is a ubiquinone + NADH + 5 H(+)(in) = a ubiquinol + NAD(+) + 4 H(+)(out). In terms of biological role, core subunit of the mitochondrial membrane respiratory chain NADH dehydrogenase (Complex I) that is believed to belong to the minimal assembly required for catalysis. Complex I functions in the transfer of electrons from NADH to the respiratory chain. The immediate electron acceptor for the enzyme is believed to be ubiquinone. This is NADH-ubiquinone oxidoreductase chain 5 (ND5) from Ceratitis capitata (Mediterranean fruit fly).